A 96-amino-acid chain; its full sequence is Large ribosomal subunit protein bL27 (96 aa).

Positions methionine 1–phenylalanine 9 are excised as a propeptide.

It belongs to the bacterial ribosomal protein bL27 family. Post-translationally, the N-terminus is cleaved by ribosomal processing cysteine protease Prp.

The sequence is that of Large ribosomal subunit protein bL27 from Geobacillus kaustophilus (strain HTA426).